A 239-amino-acid chain; its full sequence is Phosphothreonine lyase OspF (239 aa).

His-104 functions as the Proton donor in the catalytic mechanism. Lys-134 serves as the catalytic Proton acceptor.

It belongs to the phosphothreonine lyase family.

Its subcellular location is the secreted. Its function is as follows. Catalyzes the removal of the phosphate group from the phosphothreonine in the mitogen-activated protein kinases p38, phosphothreonine in the mitogen-activated protein kinases such as MAPK2/ERK2, MAPK3/ERK1, MAPK8 and MAPK14 in an irreversible reaction, thus preventing the downstream phosphorylation of histone H3. This epigenetic modification results in inhibition of the transcription of a specific subset of pro-inflammatory genes, and ultimately to a reduced immune response against the invading pathogen. The diminished immune response enhances the bacterium's ability to disseminate and multiply within the host. The polypeptide is Phosphothreonine lyase OspF (ospF) (Shigella boydii serotype 4 (strain Sb227)).